The following is a 470-amino-acid chain: MYGQQNNYGAPPPQQWGQAPPQGYQPGYQNGPPAVNYGAHPSQQQQWGAPPGPPQHQPYGAPPVNQYGAPPQHQQGYGGHSPQPPFGAPSPAPAGYGAPPTAPQGQYGAPSPYPQQPPQQGFGGPQQGYGSQPQGQSPMMYLGVPIPAPPPAVPVSTLAGYDARFDAERIRKATKGFGTDERTIIDTLSPLDAFQMDVLSRTYEQTVGRSLKSTLEKELSSWLEYTLVLLSLGPLGGDVYLLHRACNGMGTHEDLLNEVLLGRTNQEIFLLKEAYRRTYNQDLVQIVQGELSMKTERMFNMALSGQRDESPYLNHQLVQQDVETLYRAGPGKIGTDEIAICGILISRSKEHLKAIAQAFPARHRVSLSQMIHSEFSGHMRDALFFIARGVEADGDGVVRDCELLHAAMAGMGTKDERMIYRLVRNHWNRPRFNAIKNQYQVLYRNSLRRAVEGETTGKYEKALVGIIEQN.

The segment at 1 to 143 is disordered; the sequence is MYGQQNNYGA…QGQSPMMYLG (143 aa). Low complexity predominate over residues 15 to 34; sequence QWGQAPPQGYQPGYQNGPPA. The segment covering 82–92 has biased composition (pro residues); the sequence is PQPPFGAPSPA. Composition is skewed to low complexity over residues 93–110 and 128–138; these read PAGYGAPPTAPQGQYGAP and GYGSQPQGQSP. 4 Annexin repeats span residues 161-232, 233-304, 316-388, and 395-468; these read YDAR…LLSL, GPLG…MALS, QLVQ…FIAR, and DGVV…GIIE.

Belongs to the annexin family.

Does not appear to play a major role in virulence. May play a role in titan cell formation. This chain is Annexin C1, found in Cryptococcus neoformans var. grubii serotype A (strain H99 / ATCC 208821 / CBS 10515 / FGSC 9487) (Filobasidiella neoformans var. grubii).